The chain runs to 164 residues: Protein-export protein SecB (164 aa).

It belongs to the SecB family. Homotetramer, a dimer of dimers. One homotetramer interacts with 1 SecA dimer.

Its subcellular location is the cytoplasm. Its function is as follows. One of the proteins required for the normal export of preproteins out of the cell cytoplasm. It is a molecular chaperone that binds to a subset of precursor proteins, maintaining them in a translocation-competent state. It also specifically binds to its receptor SecA. This Chromohalobacter salexigens (strain ATCC BAA-138 / DSM 3043 / CIP 106854 / NCIMB 13768 / 1H11) protein is Protein-export protein SecB.